A 51-amino-acid polypeptide reads, in one-letter code: Large ribosomal subunit protein eL40 (51 aa).

Residues cysteine 17, cysteine 20, cysteine 31, and cysteine 34 each coordinate Zn(2+).

The protein belongs to the eukaryotic ribosomal protein eL40 family. In terms of assembly, part of the 50S ribosomal subunit. Requires Zn(2+) as cofactor.

The protein is Large ribosomal subunit protein eL40 of Thermococcus kodakarensis (strain ATCC BAA-918 / JCM 12380 / KOD1) (Pyrococcus kodakaraensis (strain KOD1)).